Here is a 550-residue protein sequence, read N- to C-terminus: Silent protein UshA(0) (550 aa).

Positions 1–25 (MKFLKRGVALALLAAFALTTQPAQA) are cleaved as a signal peptide. D41, H43, D84, N116, H217, H252, and Q254 together coordinate a divalent metal cation. Residues C258 and C275 are joined by a disulfide bond. Residues F429 and 498 to 504 (FNATGGD) each bind substrate.

This sequence belongs to the 5'-nucleotidase family. It depends on a divalent metal cation as a cofactor.

The protein resides in the periplasm. The sequence is that of Silent protein UshA(0) (ushA) from Salmonella typhimurium (strain LT2 / SGSC1412 / ATCC 700720).